A 238-amino-acid chain; its full sequence is Probable transcriptional regulatory protein SSP2054 (238 aa).

This sequence belongs to the TACO1 family. YeeN subfamily.

Its subcellular location is the cytoplasm. The polypeptide is Probable transcriptional regulatory protein SSP2054 (Staphylococcus saprophyticus subsp. saprophyticus (strain ATCC 15305 / DSM 20229 / NCIMB 8711 / NCTC 7292 / S-41)).